Here is a 410-residue protein sequence, read N- to C-terminus: uncharacterized protein (410 aa).

The N-terminal stretch at 1-41 (MVKSFRMKALIAGAAVAAAVSAGAVSDVPAAKVLQPTAAYA) is a signal peptide.

In terms of assembly, interacts with PcrA, Pdp, YclM, YkvL, YhcQ and YomL. The interaction with PcrA is not essential for cell viability or repair of UV-induced lesions.

The protein localises to the secreted. In terms of biological role, increases the processivity of the PcrA helicase, but does not bind to DNA. This is an uncharacterized protein from Bacillus subtilis (strain 168).